The following is a 362-amino-acid chain: Probable dual-specificity RNA methyltransferase RlmN (362 aa).

The active-site Proton acceptor is the Glu99. One can recognise a Radical SAM core domain in the interval 105–341 (SPDRHTVCVS…VTVRKSQGAS (237 aa)). A disulfide bridge connects residues Cys112 and Cys346. Positions 119, 123, and 126 each coordinate [4Fe-4S] cluster. S-adenosyl-L-methionine-binding positions include 171-172 (GE), Ser204, 227-229 (SLH), and Asn303. The active-site S-methylcysteine intermediate is Cys346.

This sequence belongs to the radical SAM superfamily. RlmN family. [4Fe-4S] cluster is required as a cofactor.

Its subcellular location is the cytoplasm. The enzyme catalyses adenosine(2503) in 23S rRNA + 2 reduced [2Fe-2S]-[ferredoxin] + 2 S-adenosyl-L-methionine = 2-methyladenosine(2503) in 23S rRNA + 5'-deoxyadenosine + L-methionine + 2 oxidized [2Fe-2S]-[ferredoxin] + S-adenosyl-L-homocysteine. It catalyses the reaction adenosine(37) in tRNA + 2 reduced [2Fe-2S]-[ferredoxin] + 2 S-adenosyl-L-methionine = 2-methyladenosine(37) in tRNA + 5'-deoxyadenosine + L-methionine + 2 oxidized [2Fe-2S]-[ferredoxin] + S-adenosyl-L-homocysteine. Functionally, specifically methylates position 2 of adenine 2503 in 23S rRNA and position 2 of adenine 37 in tRNAs. The protein is Probable dual-specificity RNA methyltransferase RlmN of Chlorobium phaeobacteroides (strain BS1).